The primary structure comprises 527 residues: Probable feruloyl esterase B (527 aa).

A signal peptide spans 1–19 (MALLRHLLPVLTVGSAVQS). 2 disulfide bridges follow: C31-C76 and C65-C115. N56, N86, and N139 each carry an N-linked (GlcNAc...) asparagine glycan. Intrachain disulfides connect C188–C442, C257–C274, C283–C292, and C504–C526. S189 (acyl-ester intermediate) is an active-site residue. D258, D261, A263, D265, and I267 together coordinate Ca(2+). N277 carries an N-linked (GlcNAc...) asparagine glycan. Residues N312 and N356 are each glycosylated (N-linked (GlcNAc...) asparagine). Catalysis depends on charge relay system residues D401 and H441.

The protein belongs to the tannase family.

The protein resides in the secreted. It catalyses the reaction feruloyl-polysaccharide + H2O = ferulate + polysaccharide.. Involved in degradation of plant cell walls. Hydrolyzes the feruloyl-arabinose ester bond in arabinoxylans as well as the feruloyl-galactose and feruloyl-arabinose ester bonds in pectin. The sequence is that of Probable feruloyl esterase B (faeB) from Emericella nidulans (strain FGSC A4 / ATCC 38163 / CBS 112.46 / NRRL 194 / M139) (Aspergillus nidulans).